Here is a 365-residue protein sequence, read N- to C-terminus: Aminotransferase poxL (365 aa).

Arginine 92 lines the pyridoxal 5'-phosphate pocket. Lysine 193 bears the N6-(pyridoxal phosphate)lysine mark. Glutamate 229 contacts pyridoxal 5'-phosphate.

It belongs to the class-IV pyridoxal-phosphate-dependent aminotransferase family. Requires pyridoxal 5'-phosphate as cofactor.

The protein operates within secondary metabolite biosynthesis. Its function is as follows. Aminotransferase; part of the gene cluster that mediates the biosynthesis of oxaleimides, cytotoxic compounds containing an unusual disubstituted succinimide moiety. The first step of the pathway is provided by the HR-PKS poxF that serves in a new mode of collaborative biosynthesis with the PKS-NRPS poxE, by providing the olefin containing amino acid substrate via the synthesis of an ACP-bound dec-4-enoate. The cytochrome P450 monooxygenase poxM-catalyzed oxidation at the alpha-position creates the enzyme-bound 2-hydroxydec-4-enoyl-ACP thioester, which may be prone to spontaneous hydrolysis to yield 2-hydroxydec-4-enoic acid due to increased electrophilicity of the carbonyl. 2-hydroxydec-4-enoic acid can then be further oxidized by poxM to yield the alpha-ketoacid 2-oxodec-4-enoicacid, which is reductively aminated by the aminotransferase poxL to yield (S,E)-2-aminodec-4-enoic acid. The Hybrid PKS-NRPS synthetase poxE then performs condensation between the octaketide product of its PKS modules and the amino group of (S,E)-2-aminodec-4-enoic acid which is activated and incorporated by the adenylation domain. The resulting aminoacyl product can be cyclized by the Diels-Alderase PoxQ and reductively released by the reductive (R) domain of poxE to yield an aldehyde intermediate. The released aldehyde is then substrate for a Knoevenagel condensation by the hydrolyase poxO followed by an oxidation at the 5-position of the pyrrolidone ring. The presence of the olefin from the amino acid building block allows for migration of the substituted allyl group to occur. This allylic transposition reaction takes place in a conjugate addition, semipinacol-like fashion to yield a succinimide intermediate. Iterative two-electron oxidations of the C7 methyl of the succinimide intermediate to the carboxylic acid can be catalyzed by one of two remaining cytochrome P450 monooxygenasess poxC or poxD to yield oxaleimide A. Subsequent oxidation yields the maleimide scaffold oxaleimide I. Both oxaleimide A and oxaleimide I can undergo oxidative modifications in the decalin ring to yield the series of products oxaleimides B to H. This Penicillium oxalicum protein is Aminotransferase poxL.